The following is a 124-amino-acid chain: Fluoride-specific ion channel FluC (124 aa).

The next 4 membrane-spanning stretches (helical) occupy residues 5–25 (LVVFVGAGLGGALRHGVNLAA), 36–56 (TMIINIAGSLAMGLLTGWFAV), 70–90 (TGILGGFTTFSTFSLEAFLLM), and 100–120 (LYVLGSVAAGIAGVGASLAVI). 2 residues coordinate Na(+): Gly-74 and Thr-77.

It belongs to the fluoride channel Fluc/FEX (TC 1.A.43) family.

The protein resides in the cell inner membrane. The catalysed reaction is fluoride(in) = fluoride(out). Its activity is regulated as follows. Na(+) is not transported, but it plays an essential structural role and its presence is essential for fluoride channel function. Fluoride-specific ion channel. Important for reducing fluoride concentration in the cell, thus reducing its toxicity. The sequence is that of Fluoride-specific ion channel FluC from Methylobacterium nodulans (strain LMG 21967 / CNCM I-2342 / ORS 2060).